An 884-amino-acid polypeptide reads, in one-letter code: Microsomal triglyceride transfer protein large subunit (884 aa).

The N-terminal stretch at 1 to 21 is a signal peptide; the sequence is MMPVAGLLLCVTAVLCTSALG. The region spanning 26–660 is the Vitellogenin domain; that stretch reads LDNGKLYRYS…QSNNALLHGL (635 aa). C172 and C192 are disulfide-bonded. N348 carries N-linked (GlcNAc...) asparagine glycosylation. A disulfide bridge links C438 with C443. N-linked (GlcNAc...) asparagine glycosylation is present at N787.

In terms of assembly, heterodimer; heterodimerizes with the protein disulfide isomerase. Highest expression in the proximal part of the anterior intestine. Lower expression in the distal part of the anterior intestine, in the posterior portion of the intestinal tube and liver. Very low expression levels in heart, brain, ovary, testis and kidney.

It localises to the endoplasmic reticulum. The protein localises to the golgi apparatus. It carries out the reaction a 1,2-diacyl-sn-glycero-3-phosphocholine(in) = a 1,2-diacyl-sn-glycero-3-phosphocholine(out). The catalysed reaction is a 1,2-diacyl-sn-glycero-3-phosphoethanolamine(in) = a 1,2-diacyl-sn-glycero-3-phosphoethanolamine(out). It catalyses the reaction a cholesterol ester(in) = a cholesterol ester(out). The enzyme catalyses a triacyl-sn-glycerol(in) = a triacyl-sn-glycerol(out). With respect to regulation, inhibited by naringenin. Catalyzes the transport of triglyceride between phospholipid surfaces. Catalyzes the transport of cholesteryl ester, and phospholipid between phospholipid surfaces. Required for the assembly and secretion of plasma lipoproteins that contain apolipoprotein B. Required for yolk lipid utilization and absorption of dietary lipids in larvae. The polypeptide is Microsomal triglyceride transfer protein large subunit (Danio rerio (Zebrafish)).